The chain runs to 339 residues: Probable E3 ubiquitin-protein ligase BAH1-like 1 (339 aa).

The region spanning 1 to 163 (MKFGAIYEEY…GSVSGRDFKS (163 aa)) is the SPX domain. An RING-type zinc finger spans residues 235-284 (CPICLDTLFNPYALSCGHLFCKGCACGAASVYIFQGVKSAPPEAKCPVCR).

The protein belongs to the RING-type zinc finger family.

It carries out the reaction S-ubiquitinyl-[E2 ubiquitin-conjugating enzyme]-L-cysteine + [acceptor protein]-L-lysine = [E2 ubiquitin-conjugating enzyme]-L-cysteine + N(6)-ubiquitinyl-[acceptor protein]-L-lysine.. Its pathway is protein modification; protein ubiquitination. The chain is Probable E3 ubiquitin-protein ligase BAH1-like 1 from Oryza sativa subsp. indica (Rice).